We begin with the raw amino-acid sequence, 446 residues long: MTNMSQPPATEKKGVSDLLGFKIFGMPLPLYAFALITLLLSHFYNALPTDIVGGFAIMFIIGAIFGEIGKRLPIFNKYIGGAPVMIFLVAAYFVYAGIFTQKEIDAISNVMDKSNFLNLFIAVLITGAILSVNRRLLLKSLLGYIPTILMGIVGASIFGIAIGLVFGIPVDRIMMLYVLPIMGGGNGAGAVPLSEIYHSVTGRSREEYYSTAIAILTIANIFAIVFAAVLDIIGKKHTWLSGEGELVRKASFKVEEDEKTGQITHRETAVGLVLSTTCFLLAYVVAKKILPSIGGVAIHYFAWMVLIVAALNASGLCSPEIKAGAKRLSDFFSKQLLWVLMVGVGVCYTDLQEIINAITFANVVIAAIIVIGAVLGAAIGGWLMGFFPIESAITAGLCMANRGGSGDLEVLSACNRMNLISYAQISSRLGGGIVLVIASIVFGMMI.

Residues Met1 to Pro27 are Cytoplasmic-facing. A helical membrane pass occupies residues Leu28–Tyr44. Topologically, residues Asn45–Asp50 are periplasmic. Residues Ile51–Arg71 form a helical membrane-spanning segment. Residues Leu72–Gly80 lie on the Cytoplasmic side of the membrane. The helical transmembrane segment at Gly81–Tyr95 threads the bilayer. Residues Ala96–Asn115 lie on the Periplasmic side of the membrane. Residues Phe116 to Leu130 traverse the membrane as a helical segment. At Ser131–Leu136 the chain is on the cytoplasmic side. Residues Leu137–Phe166 form a helical membrane-spanning segment. At Gly167–Ile181 the chain is on the periplasmic side. Residues Ile181 and Gly183 each coordinate Na(+). An intramembrane region (helical) is located at residues Met182–Gly189. The citrate site is built by Asn186 and Gly187. Over Ala190 to Ala212 the chain is Periplasmic. Residues Ile213–Ile233 form a helical membrane-spanning segment. Over Gly234–Thr264 the chain is Cytoplasmic. A helical transmembrane segment spans residues His265 to Lys287. Over Lys288–His299 the chain is Periplasmic. A helical membrane pass occupies residues Tyr300–Gly315. At Leu316 to Arg327 the chain is on the cytoplasmic side. Residues Leu328–Leu351 form a helical membrane-spanning segment. Residues Gln352–Thr359 lie on the Periplasmic side of the membrane. A helical membrane pass occupies residues Phe360–Gly381. Residues Trp382–Cys398 lie on the Cytoplasmic side of the membrane. Na(+)-binding residues include Met399 and Asn401. The segment at residues Met399 to Gly406 is an intramembrane region (helical). Arg402, Gly404, and Ser405 together coordinate citrate. Topologically, residues Asp407–Arg416 are cytoplasmic. A helical membrane pass occupies residues Met417–Ala438. Arg428 is a binding site for citrate. The Periplasmic segment spans residues Ser439–Ile446.

This sequence belongs to the 2-hydroxycarboxylate transporter (2-HCT) (TC 2.A.24) family. In terms of assembly, homodimer.

It is found in the cell inner membrane. The enzyme catalyses citrate(out) + 2 Na(+)(out) = citrate(in) + 2 Na(+)(in). Its activity is regulated as follows. In the absence of Na(+), transport is inhibited by the thiol reagents N-ethylmaleimide (NEM) and the methanethiosulfonate (MTS) derivatives MTSEA, MTSET and MTSES. However, inactivation by NEM, MTSES and MTSET is prevented by the presence of Na(+). In the absence of Na(+), the substrate citrate has no effect on the inactivation by permeable or impermeable thiol reagents. In contrast, when subsaturating concentrations of Na(+) are present, citrate significantly reduces inactivation, suggesting ordered binding of the substrate and co-ion; citrate is bound after Na(+). The membrane impermeable bulky maleimide AmdiS does not inactivate the transporter in right-side-out membrane vesicles. The apparent affinity for Na(+) decreases with increasing proton concentration. Protons cannot replace Na(+) in the translocation step but the decrease in apparent affinity for Na(+) towards lower pH suggests that protons can compete with Na(+) for the cation-binding sites. In terms of biological role, secondary active transporter that catalyzes the uptake of citrate across the membrane with the concomitant uptake of sodium. There are conflicting data regarding exact substrate stoichiometry: the sodium/citrate stoichiometry was predicted to be 1, but the latest studies suggest that CitS transports citrate in symport with 2 sodium ions. Transports citrate as a divalent citrate anion, H-citrate(2-). Shows narrow substrate specificity and is very specific, transporting only citrate and to a low extent citromalate. Symport of Na(+) is absolutely required in the range pH 5-7 because no uptake can be detected in the absence of Na(+). Lithium can replace Na(+) in the symport reaction but it takes about a 200-fold higher concentration of Li(+) over Na(+) to achieve the same rate of uptake. The polypeptide is Citrate/sodium symporter (Klebsiella pneumoniae).